The sequence spans 270 residues: Glutamate racemase (270 aa).

Residues 14-15 and 46-47 each bind substrate; these read DS and YG. The Proton donor/acceptor role is filled by Cys-77. Residue 78 to 79 coordinates substrate; sequence NT. The active-site Proton donor/acceptor is Cys-189. 190–191 serves as a coordination point for substrate; sequence TH.

This sequence belongs to the aspartate/glutamate racemases family.

It catalyses the reaction L-glutamate = D-glutamate. It functions in the pathway cell wall biogenesis; peptidoglycan biosynthesis. Provides the (R)-glutamate required for cell wall biosynthesis. This Neisseria meningitidis serogroup C protein is Glutamate racemase.